The chain runs to 111 residues: Rho GDP-dissociation inhibitor 1 (111 aa).

Residues K57 and K60 each participate in a glycyl lysine isopeptide (Lys-Gly) (interchain with G-Cter in SUMO1); alternate cross-link. Glycyl lysine isopeptide (Lys-Gly) (interchain with G-Cter in SUMO2); alternate cross-links involve residues K57 and K60. The residue at position 60 (K60) is an N6-acetyllysine; alternate. An N6-succinyllysine; alternate modification is found at K60.

Belongs to the Rho GDI family. Monomer. Interacts with FER. Interacts with PLXNB3. Forms a heterodimer with RAC1. Interacts with RHOA, the affinity is increased by three orders of magnitude when RHOA is prenylated. Interacts with PSMD10; the interaction increases ARHGDIA association with RHOA, leading to ARHGDIA-mediated inactivation of RHOA and ROCK and prolonged AKT activation. Interacts with KANK2; the interaction is direct and may regulate the interaction of ARHGDIA with RHOA, RAC1 and CDC42. Interacts with RHOC. Interacts with CDC42. Interacts with NGFR (via death domain); NGFR binding decreases the affinity for RHOA. In terms of processing, the N-terminus is blocked.

The protein resides in the cytoplasm. In terms of biological role, controls Rho proteins homeostasis. Regulates the GDP/GTP exchange reaction of the Rho proteins by inhibiting the dissociation of GDP from them, and the subsequent binding of GTP to them. Retains Rho proteins such as CDC42, RAC1 and RHOA in an inactive cytosolic pool, regulating their stability and protecting them from degradation. Actively involved in the recycling and distribution of activated Rho GTPases in the cell, mediates extraction from membranes of both inactive and activated molecules due its exceptionally high affinity for prenylated forms. Through the modulation of Rho proteins, may play a role in cell motility regulation. In glioma cells, inhibits cell migration and invasion by mediating the signals of SEMA5A and PLXNB3 that lead to inactivation of RAC1. The chain is Rho GDP-dissociation inhibitor 1 (ARHGDIA) from Cavia porcellus (Guinea pig).